A 345-amino-acid polypeptide reads, in one-letter code: Beta-ketoacyl-[acyl-carrier-protein] synthase III (345 aa).

Active-site residues include Cys114 and His272. Residues 273–277 (QANQR) are ACP-binding. Asn302 is a catalytic residue.

This sequence belongs to the thiolase-like superfamily. FabH family. In terms of assembly, homodimer.

Its subcellular location is the cytoplasm. The enzyme catalyses malonyl-[ACP] + acetyl-CoA + H(+) = 3-oxobutanoyl-[ACP] + CO2 + CoA. The protein operates within lipid metabolism; fatty acid biosynthesis. Catalyzes the condensation reaction of fatty acid synthesis by the addition to an acyl acceptor of two carbons from malonyl-ACP. Catalyzes the first condensation reaction which initiates fatty acid synthesis and may therefore play a role in governing the total rate of fatty acid production. Possesses both acetoacetyl-ACP synthase and acetyl transacylase activities. Its substrate specificity determines the biosynthesis of branched-chain and/or straight-chain of fatty acids. The chain is Beta-ketoacyl-[acyl-carrier-protein] synthase III from Rhodopirellula baltica (strain DSM 10527 / NCIMB 13988 / SH1).